Here is a 150-residue protein sequence, read N- to C-terminus: Large ribosomal subunit protein bL9 (150 aa).

The protein belongs to the bacterial ribosomal protein bL9 family.

In terms of biological role, binds to the 23S rRNA. This Shewanella woodyi (strain ATCC 51908 / MS32) protein is Large ribosomal subunit protein bL9.